The sequence spans 205 residues: Ypt/Rab-type GTPase avaA (205 aa).

GTP contacts are provided by residues 17–23, 33–40, glycine 66, 125–128, and 157–159; these read SGVGKTS, FSGSYKAT, NKID, and SAK. An Effector region motif is present at residues 37 to 45; that stretch reads YKATIGADF. 2 S-geranylgeranyl cysteine lipidation sites follow: cysteine 203 and cysteine 205. Cysteine 205 is subject to Cysteine methyl ester.

This sequence belongs to the small GTPase superfamily. Rab family.

With respect to regulation, rab activation is generally mediated by a guanine exchange factor (GEF), while inactivation through hydrolysis of bound GTP is catalyzed by a GTPase activating protein (GAP). Its function is as follows. Ypt/Rab-type GTPases are key regulators of membrane trafficking and intracellular vesicular transport. They act as molecular switches that convert between GTP-bound and GDP-bound states, and regulate virtually all steps of membrane traffic from the formation of the transport vesicle at the donor membrane to its fusion at the target membrane. In the GDP-bound state, Ypt proteins are predominantly cytosolic, solubilized through the interaction with a GDP dissociation inhibitor (GDI). In the GTP-bound state, the proteins are membrane bound and interact with specific effector proteins that select cargo, promote vesicle movement, or verify the correct site of fusion. AvaA functions in vacuolar biogenesis. This Emericella nidulans (strain FGSC A4 / ATCC 38163 / CBS 112.46 / NRRL 194 / M139) (Aspergillus nidulans) protein is Ypt/Rab-type GTPase avaA.